Here is a 443-residue protein sequence, read N- to C-terminus: Transmembrane protein 184C (443 aa).

7 helical membrane passes run 15–35 (LVVL…IWKL), 46–66 (AWFI…WGIL), 84–104 (ILWM…YPDI), 182–202 (PVTT…EGDF), 210–230 (YLVI…VLFY), 252–272 (VVFV…AGVI), and 284–304 (VATG…AVAH). The span at 369-378 (TSLLSSSTQD) shows a compositional bias: polar residues. The segment at 369–422 (TSLLSSSTQDPISAASSIPPSPSGHYQGFGQTITPQTTPTATTMPEELYSADSP) is disordered. Positions 399-411 (QTITPQTTPTATT) are enriched in low complexity.

It belongs to the TMEM184 family.

It is found in the membrane. May play a role in cell growth. The chain is Transmembrane protein 184C (tmem184c) from Xenopus tropicalis (Western clawed frog).